Consider the following 260-residue polypeptide: MDKKIVIPGDLLSDDVKKSGYGTYVKNDKIYSSLCGIESLKEDKVGVIPLAGAYIPSVNDVVIGVVIVVTPSNWILDIAAPYDGLLHVSEYPRRVESREMPEILDVGDSVILRVRDVDSSMKIELALRDPNLHKLRTGQIVEVEPVKVPRVIGHGGSMISMLKKETNCSIFVGQNGRIWIDGKDEDIELLSKALRKIEAEAQRSGLTDRIYNFLKNERMKEKESKPVEFLKNEKTDVSVAKEDHSEDIYRKIDVLLDPKN.

The S1 motif domain maps to 59 to 128 (NDVVIGVVIV…SSMKIELALR (70 aa)). A KH domain is found at 136 to 194 (RTGQIVEVEPVKVPRVIGHGGSMISMLKKETNCSIFVGQNGRIWIDGKDEDIELLSKAL).

It belongs to the RRP4 family. As to quaternary structure, component of the archaeal exosome complex. Forms a trimer of Rrp4 and/or Csl4 subunits. The trimer associates with a hexameric ring-like arrangement composed of 3 Rrp41-Rrp42 heterodimers.

The protein resides in the cytoplasm. In terms of biological role, non-catalytic component of the exosome, which is a complex involved in RNA degradation. Increases the RNA binding and the efficiency of RNA degradation. Confers strong poly(A) specificity to the exosome. This chain is Exosome complex component Rrp4, found in Methanosarcina mazei (strain ATCC BAA-159 / DSM 3647 / Goe1 / Go1 / JCM 11833 / OCM 88) (Methanosarcina frisia).